An 88-amino-acid polypeptide reads, in one-letter code: Large ribosomal subunit protein bL27 (88 aa).

The disordered stretch occupies residues 1 to 21 (MAHKKGASSSRNGRDSNAQRL). The segment covering 7-19 (ASSSRNGRDSNAQ) has biased composition (polar residues).

It belongs to the bacterial ribosomal protein bL27 family.

The chain is Large ribosomal subunit protein bL27 from Frankia casuarinae (strain DSM 45818 / CECT 9043 / HFP020203 / CcI3).